We begin with the raw amino-acid sequence, 199 residues long: Nucleoid occlusion factor SlmA (199 aa).

The 61-residue stretch at 11–71 (ERRQQVLTVL…ALIDNLEAHL (61 aa)) folds into the HTH tetR-type domain. The H-T-H motif DNA-binding region spans 34 to 53 (TTARIAAEVGVSEAALYRYY).

The protein belongs to the nucleoid occlusion factor SlmA family. In terms of assembly, homodimer. Interacts with FtsZ.

Its subcellular location is the cytoplasm. The protein resides in the nucleoid. Functionally, required for nucleoid occlusion (NO) phenomenon, which prevents Z-ring formation and cell division over the nucleoid. Acts as a DNA-associated cell division inhibitor that binds simultaneously chromosomal DNA and FtsZ, and disrupts the assembly of FtsZ polymers. SlmA-DNA-binding sequences (SBS) are dispersed on non-Ter regions of the chromosome, preventing FtsZ polymerization at these regions. This is Nucleoid occlusion factor SlmA from Pasteurella multocida (strain Pm70).